The primary structure comprises 411 residues: Tyrosine--tRNA ligase (411 aa).

Tyrosine 33 contacts L-tyrosine. Positions 38-47 match the 'HIGH' region motif; the sequence is PTAESLHLGN. L-tyrosine-binding residues include tyrosine 160 and glutamine 164. Residues 222-226 carry the 'KMSKS' region motif; that stretch reads KIGKS. ATP is bound at residue lysine 225. The region spanning 347–411 is the S4 RNA-binding domain; the sequence is SVIETLIKNK…KKQVILFKTV (65 aa).

The protein belongs to the class-I aminoacyl-tRNA synthetase family. TyrS type 1 subfamily. As to quaternary structure, homodimer.

The protein resides in the cytoplasm. The catalysed reaction is tRNA(Tyr) + L-tyrosine + ATP = L-tyrosyl-tRNA(Tyr) + AMP + diphosphate + H(+). In terms of biological role, catalyzes the attachment of tyrosine to tRNA(Tyr) in a two-step reaction: tyrosine is first activated by ATP to form Tyr-AMP and then transferred to the acceptor end of tRNA(Tyr). The polypeptide is Tyrosine--tRNA ligase (Mycoplasmopsis agalactiae (strain NCTC 10123 / CIP 59.7 / PG2) (Mycoplasma agalactiae)).